We begin with the raw amino-acid sequence, 74 residues long: Defensin-like protein P322 (74 aa).

Positions 1 to 19 (MRFFATFFLLAMLVVATKM) are cleaved as a signal peptide. 4 disulfide bridges follow: Cys30-Cys74, Cys41-Cys61, Cys47-Cys68, and Cys51-Cys70.

Belongs to the DEFL family. Protease inhibitor I18 (RTI/MTI-2) subfamily. Tuber.

Its subcellular location is the secreted. The sequence is that of Defensin-like protein P322 from Solanum tuberosum (Potato).